A 394-amino-acid chain; its full sequence is p-hydroxybenzoate hydroxylase (394 aa).

Residues Ser-13, Glu-32, 42 to 47 (RIRAGV), and Gln-102 contribute to the FAD site. Substrate is bound by residues Tyr-201, 212–214 (SQR), and Tyr-222. Asp-286 serves as a coordination point for FAD. Substrate is bound at residue Pro-293. 299–300 (LN) contacts FAD.

It belongs to the aromatic-ring hydroxylase family. Homodimer. Requires FAD as cofactor.

It carries out the reaction 4-hydroxybenzoate + NADPH + O2 + H(+) = 3,4-dihydroxybenzoate + NADP(+) + H2O. The protein operates within aromatic compound metabolism; benzoate degradation via hydroxylation; 3,4-dihydroxybenzoate from benzoate: step 2/2. Its function is as follows. Catalyzes the incorporation of an atom of dioxygen into p-hydroxybenzoate (p-OHB) to form 3,4-dihydroxybenzoate (3,4DOHB). The reaction occurs in two parts: reduction of the flavin adenine dinucleotide (FAD) in the enzyme by reduced nicotinamide adenine dinucleotide phosphate (NADPH) in response to binding p-hydroxybenzoate to the enzyme and oxidation of reduced FAD with oxygen to form a hydroperoxide, which then oxygenates p-hydroxybenzoate. The chain is p-hydroxybenzoate hydroxylase (pobA) from Pseudomonas fluorescens.